Consider the following 51-residue polypeptide: Large ribosomal subunit protein eL39 (51 aa).

Residues 1 to 23 (MPSQKSFRTKQKLAKAQKQNRPL) are disordered.

It belongs to the eukaryotic ribosomal protein eL39 family. In terms of assembly, component of the large ribosomal subunit. Mature ribosomes consist of a small (40S) and a large (60S) subunit. The 40S subunit contains about 32 different proteins and 1 molecule of RNA (18S). The 60S subunit contains 45 different proteins and 3 molecules of RNA (25S, 5.8S and 5S).

Its subcellular location is the cytoplasm. Component of the ribosome, a large ribonucleoprotein complex responsible for the synthesis of proteins in the cell. The small ribosomal subunit (SSU) binds messenger RNAs (mRNAs) and translates the encoded message by selecting cognate aminoacyl-transfer RNA (tRNA) molecules. The large subunit (LSU) contains the ribosomal catalytic site termed the peptidyl transferase center (PTC), which catalyzes the formation of peptide bonds, thereby polymerizing the amino acids delivered by tRNAs into a polypeptide chain. The nascent polypeptides leave the ribosome through a tunnel in the LSU and interact with protein factors that function in enzymatic processing, targeting, and the membrane insertion of nascent chains at the exit of the ribosomal tunnel. The sequence is that of Large ribosomal subunit protein eL39 from Candida albicans (strain SC5314 / ATCC MYA-2876) (Yeast).